Reading from the N-terminus, the 139-residue chain is Endoribonuclease YbeY (139 aa).

His-105, His-109, and Asp-115 together coordinate Zn(2+).

It belongs to the endoribonuclease YbeY family. Requires Zn(2+) as cofactor.

Its subcellular location is the cytoplasm. Its function is as follows. Single strand-specific metallo-endoribonuclease involved in late-stage 70S ribosome quality control and in maturation of the 3' terminus of the 16S rRNA. The sequence is that of Endoribonuclease YbeY from Flavobacterium johnsoniae (strain ATCC 17061 / DSM 2064 / JCM 8514 / BCRC 14874 / CCUG 350202 / NBRC 14942 / NCIMB 11054 / UW101) (Cytophaga johnsonae).